Here is an 800-residue protein sequence, read N- to C-terminus: DNA topoisomerase 4 subunit A (800 aa).

The Topo IIA-type catalytic domain maps to 31–495 (LPDVRDGLKP…EIEEIKIDKE (465 aa)). The active-site O-(5'-phospho-DNA)-tyrosine intermediate is Tyr119.

This sequence belongs to the type II topoisomerase GyrA/ParC subunit family. ParC type 2 subfamily. As to quaternary structure, heterotetramer composed of ParC and ParE.

The protein resides in the cell membrane. The enzyme catalyses ATP-dependent breakage, passage and rejoining of double-stranded DNA.. Topoisomerase IV is essential for chromosome segregation. It relaxes supercoiled DNA. Performs the decatenation events required during the replication of a circular DNA molecule. In Staphylococcus aureus (strain N315), this protein is DNA topoisomerase 4 subunit A.